Here is a 225-residue protein sequence, read N- to C-terminus: Ribonuclease 3 (225 aa).

Residues 5 to 127 form the RNase III domain; the sequence is IDKLERKLGY…IIGAIYLDSD (123 aa). Residue E40 coordinates Mg(2+). D44 is an active-site residue. Mg(2+)-binding residues include D113 and E116. E116 is an active-site residue. The DRBM domain occupies 154–224; it reads DPKTRLQEFL…AETALEQLTN (71 aa). Residues 204–225 are disordered; the sequence is GTSRRKAEQAAAETALEQLTNG. Residues 212–225 show a composition bias toward low complexity; it reads QAAAETALEQLTNG.

The protein belongs to the ribonuclease III family. In terms of assembly, homodimer. Requires Mg(2+) as cofactor.

It localises to the cytoplasm. The catalysed reaction is Endonucleolytic cleavage to 5'-phosphomonoester.. Digests double-stranded RNA. Involved in the processing of primary rRNA transcript to yield the immediate precursors to the large and small rRNAs (23S and 16S). Processes some mRNAs, and tRNAs when they are encoded in the rRNA operon. Processes pre-crRNA and tracrRNA of type II CRISPR loci if present in the organism. The sequence is that of Ribonuclease 3 from Vibrio parahaemolyticus serotype O3:K6 (strain RIMD 2210633).